Consider the following 1094-residue polypeptide: Probable arabinosyltransferase C (1094 aa).

13 helical membrane passes run 28 to 50, 232 to 251, 264 to 286, 341 to 360, 373 to 392, 431 to 453, 466 to 488, 530 to 552, 565 to 582, 586 to 608, 620 to 642, 657 to 679, and 700 to 722; these read IARYVAVVAGLLGAVLAIATPLL, AAMILGVALTGAALVALHIL, PARWWSTGGLDTLVIAVLVWWHF, SIWMRLPTLAMALTCWWVIS, TSRAAAWTAAGMFLAVWLPL, IGALTLFSGPTGIASIGALLVAI, RFGVLPLVAPILAAATVTAIPIF, SIARRFAVLALVLALAVSVAMSL, SRRIIGITIISFLAMMFT, WTHHFGVFAGLAGSLGALAAVAV, TVFAAVVVFVLALSFASVNGWWY, WRWSLTTALLELTVLVLLLAAWF, and LAGIVQSPLAIATWLLVLFEVVS. Residues 817–831 show a composition bias toward low complexity; sequence GSEPGTEGGTTAAPG. Residues 817–836 are disordered; it reads GSEPGTEGGTTAAPGINGSR.

The protein belongs to the emb family.

Its subcellular location is the cell membrane. Functionally, arabinosyl transferase responsible for the polymerization of arabinose into the arabinan of arabinogalactan. This is Probable arabinosyltransferase C (embC) from Mycobacterium tuberculosis (strain ATCC 25618 / H37Rv).